The following is a 522-amino-acid chain: Echinocystic acid 23-monooxygenase (522 aa).

The chain crosses the membrane as a helical; Signal-anchor for type II membrane protein span at residues 4–24 (LPYIATSIACIVILRWALNMM). An N-linked (GlcNAc...) asparagine glycan is attached at asparagine 190. Cysteine 470 provides a ligand contact to heme.

It belongs to the cytochrome P450 family. Heme is required as a cofactor. Mainly expressed in flowers and flower buds, to a lesser extent in young leaves and, at low levels, in old leaves, stems and roots.

It is found in the membrane. It participates in secondary metabolite biosynthesis; terpenoid biosynthesis. Its function is as follows. Component of the oleanane-type triterpene saponins (e.g. saponarioside A and saponarioside B) biosynthetic pathway, leading to the production of natural products with detergent properties used as traditional sources of soap. An oxidoreductase that facilitates the oxidation of the methyl group to a carboxyl group at the C-23 position of echinocystic acid, resulting in the formation of quillaic acid (QA). The sequence is that of Echinocystic acid 23-monooxygenase from Saponaria officinalis (Common soapwort).